Reading from the N-terminus, the 366-residue chain is Palmitoyltransferase ZDHHC2 (366 aa).

Residues 1-15 (MAPSGSGGVRRRCRR) lie on the Cytoplasmic side of the membrane. A helical membrane pass occupies residues 16–36 (VLYWIPVVFISLLLGWSYYAY). The Lumenal portion of the chain corresponds to 37 to 47 (AIQLCIVSMEN). A helical transmembrane segment spans residues 48-68 (IGEQVVCLMAYHLLFAMFVWS). The Cytoplasmic segment spans residues 69-169 (YWKTIFTLPM…NNCVGFSNYK (101 aa)). Positions 126-176 (RYCDRCQLIKPDRCHHCSVCDKCILKMDHHCPWVNNCVGFSNYKFFLLFLA) constitute a DHHC domain. Cysteine 156 functions as the S-palmitoyl cysteine intermediate in the catalytic mechanism. The helical transmembrane segment at 170–190 (FFLLFLAYSLLYCLFIAATDL) threads the bilayer. The Lumenal segment spans residues 191–207 (QYFIRFWTNGLPDTQAK). A helical transmembrane segment spans residues 208–228 (FHIMFLFFAAAMFSVSLSSLF). At 229–366 (GYHCWLVSKN…NPALTMENET (138 aa)) the chain is on the cytoplasmic side. Residues 297-316 (VNQDPEQPSTPAGLNSTVKN) show a composition bias toward polar residues. The tract at residues 297-366 (VNQDPEQPST…NPALTMENET (70 aa)) is disordered. Positions 298–366 (NQDPEQPSTP…NPALTMENET (69 aa)) are mediates localization to plasma membrane and recycling endosomes. The span at 326-336 (PLRESQSHLLK) shows a compositional bias: basic and acidic residues. The Non-canonical dileucine endocytic signal signature appears at 334–335 (LL). The segment covering 337 to 347 (DSQTWTESSAN) has biased composition (polar residues). The NPxY-like endocytic signal signature appears at 357–360 (NPAL).

It belongs to the DHHC palmitoyltransferase family. As to quaternary structure, monomer. Homodimer. The monomeric form has a higher catalytic activity. In terms of processing, autopalmitoylated. As to expression, expressed in all brain regions.

Its subcellular location is the postsynaptic density. It localises to the postsynaptic recycling endosome membrane. The protein localises to the cell membrane. It is found in the endoplasmic reticulum membrane. The protein resides in the golgi apparatus membrane. It catalyses the reaction L-cysteinyl-[protein] + hexadecanoyl-CoA = S-hexadecanoyl-L-cysteinyl-[protein] + CoA. The enzyme catalyses L-cysteinyl-[protein] + tetradecanoyl-CoA = S-tetradecanoyl-L-cysteinyl-[protein] + CoA. The catalysed reaction is L-cysteinyl-[protein] + octadecanoyl-CoA = S-octadecanoyl-L-cysteinyl-[protein] + CoA. In terms of biological role, palmitoyltransferase that catalyzes the addition of palmitate onto various protein substrates and is involved in a variety of cellular processes. Has no stringent fatty acid selectivity and in addition to palmitate can also transfer onto target proteins myristate from tetradecanoyl-CoA and stearate from octadecanoyl-CoA. In the nervous system, plays a role in long term synaptic potentiation by palmitoylating AKAP5 through which it regulates protein trafficking from the dendritic recycling endosomes to the plasma membrane and controls both structural and functional plasticity at excitatory synapses. In dendrites, mediates the palmitoylation of DLG4 when synaptic activity decreases and induces synaptic clustering of DLG4 and associated AMPA-type glutamate receptors. Also mediates the de novo and turnover palmitoylation of RGS7BP, a shuttle for Gi/o-specific GTPase-activating proteins/GAPs, promoting its localization to the plasma membrane in response to the activation of G protein-coupled receptors. Through the localization of these GTPase-activating proteins/GAPs, it also probably plays a role in G protein-coupled receptors signaling in neurons. Also probably plays a role in cell adhesion by palmitoylating CD9 and CD151 to regulate their expression and function. Palmitoylates the endoplasmic reticulum protein CKAP4 and regulates its localization to the plasma membrane. Could also palmitoylate LCK and regulate its localization to the plasma membrane. This is Palmitoyltransferase ZDHHC2 from Mus musculus (Mouse).